We begin with the raw amino-acid sequence, 117 residues long: Modulator protein MzrA (117 aa).

Over 1-11 (MMTNRRFRKPS) the chain is Cytoplasmic. Residues 12–29 (AWRLLLLLLPLVVLLSMS) form a helical membrane-spanning segment. Over 30-117 (SRRLPDEVML…SNGTSPVTRS (88 aa)) the chain is Periplasmic.

It belongs to the MzrA family. Interacts with EnvZ.

It localises to the cell inner membrane. Modulates the activity of the EnvZ/OmpR two-component regulatory system, probably by directly modulating EnvZ enzymatic activity and increasing stability of phosphorylated OmpR. The protein is Modulator protein MzrA of Dickeya dadantii (strain 3937) (Erwinia chrysanthemi (strain 3937)).